We begin with the raw amino-acid sequence, 424 residues long: SNF1-related protein kinase regulatory subunit gamma-1 (424 aa).

An N-acetylalanine modification is found at alanine 2. Phosphoserine is present on serine 44. CBS domains follow at residues leucine 63 to serine 131, threonine 185 to leucine 244, methionine 263 to tyrosine 324, and isoleucine 350 to phenylalanine 408.

Belongs to the 5'-AMP-activated protein kinase gamma subunit family. Subunit of a probable heterotrimeric complex consisting of an alpha catalytic (KIN10 or KIN11) subunit, and a beta (KINB) and a gamma (KING or SNF4) non-catalytic regulatory subunits. Interacts with HXK1 in mitochondrion. Sumoylated by SIZ1. As to expression, expressed in vegetative organs and, to lower extent, in reproductive organs.

It is found in the mitochondrion. Its function is as follows. Regulatory subunit of the probable trimeric SNF1-related protein kinase (SnRK) complex, which may play a role in a signal transduction cascade regulating gene expression and carbohydrate metabolism in higher plants. The SnRK complex may also be involved in the regulation of fatty acid synthesis by phosphorylation of acetyl-CoA carboxylase and in assimilation of nitrogen by phosphorylating nitrate reductase. This Arabidopsis thaliana (Mouse-ear cress) protein is SNF1-related protein kinase regulatory subunit gamma-1 (KING1).